Reading from the N-terminus, the 670-residue chain is Outer dynein arm-docking complex subunit 1 (670 aa).

3 coiled-coil regions span residues 9–155 (SKEV…RYLN), 183–224 (AVRE…EQLH), and 302–381 (NFIN…IQLL). The disordered stretch occupies residues 454–473 (KMAPLQPPDTLEDPPGFEAS). Phosphoserine is present on Ser517. 2 disordered regions span residues 526–596 (AGSS…ASSG) and 616–670 (VGSS…DSRG). Residues 584–596 (GHVTFGSTSASSG) are compositionally biased toward polar residues. The segment covering 650–670 (SSTGPASSTGPGSSTSKDSRG) has biased composition (low complexity).

This sequence belongs to the ODA1/DCC2 family. In terms of assembly, component of the outer dynein arm-docking complex along with ODAD2, ODAD3, ODAD4 and CLXN. Interacts with ODAD3. Interacts with ODAD4; this interaction may facilitate the recruitment and/or attachment of outer dynein arm docking complex proteins, including ODAD1, ODAD3, and ODAD4 to ciliary axonemes. Interacts with DNAH9. Interacts with MNS1. Interacts with PIERCE1 and PIERCE2; the interactions link the outer dynein arms docking complex (ODA-DC) to the internal microtubule inner proteins (MIP) in cilium axoneme. In terms of tissue distribution, expressed in nasal epithelial cells. Highly expressed in testis and also detected in lung, brain and kidney.

The protein localises to the cytoplasm. It is found in the cytoskeleton. The protein resides in the cilium axoneme. Its function is as follows. Component of the outer dynein arm-docking complex (ODA-DC) that mediates outer dynein arms (ODA) binding onto the doublet microtubule. Involved in mediating assembly of both ODAs and their axonemal docking complex onto ciliary microtubules. The chain is Outer dynein arm-docking complex subunit 1 from Homo sapiens (Human).